A 323-amino-acid polypeptide reads, in one-letter code: GTP 3',8-cyclase (323 aa).

Residues 4–228 (KYGRSIDYLR…VPVNIQNNGP (225 aa)) enclose the Radical SAM core domain. Arg-13 provides a ligand contact to GTP. The [4Fe-4S] cluster site is built by Cys-20 and Cys-24. Residue Tyr-26 coordinates S-adenosyl-L-methionine. Residue Cys-27 participates in [4Fe-4S] cluster binding. Arg-63 provides a ligand contact to GTP. Gly-67 provides a ligand contact to S-adenosyl-L-methionine. Residue Thr-94 coordinates GTP. An S-adenosyl-L-methionine-binding site is contributed by Ser-118. Lys-155 contacts GTP. An S-adenosyl-L-methionine-binding site is contributed by Met-189. [4Fe-4S] cluster-binding residues include Cys-252 and Cys-255. Residue 257–259 (RMR) participates in GTP binding. [4Fe-4S] cluster is bound at residue Cys-269.

It belongs to the radical SAM superfamily. MoaA family. In terms of assembly, monomer and homodimer. The cofactor is [4Fe-4S] cluster.

The catalysed reaction is GTP + AH2 + S-adenosyl-L-methionine = (8S)-3',8-cyclo-7,8-dihydroguanosine 5'-triphosphate + 5'-deoxyadenosine + L-methionine + A + H(+). It functions in the pathway cofactor biosynthesis; molybdopterin biosynthesis. Catalyzes the cyclization of GTP to (8S)-3',8-cyclo-7,8-dihydroguanosine 5'-triphosphate. This chain is GTP 3',8-cyclase, found in Petrotoga mobilis (strain DSM 10674 / SJ95).